The primary structure comprises 451 residues: Phenylalanine-4-hydroxylase (451 aa).

Serine 16 is subject to Phosphoserine; by PKA. Residues 35–113 (SLIFSLKEEV…TVHELSRDKK (79 aa)) form the ACT domain. Fe cation-binding residues include histidine 284, histidine 289, and glutamate 329.

It belongs to the biopterin-dependent aromatic amino acid hydroxylase family. In terms of assembly, homodimer and homotetramer. Fe(2+) serves as cofactor. Post-translationally, phosphorylation at Ser-16 increases basal activity and facilitates activation by the substrate phenylalanine.

The enzyme catalyses (6R)-L-erythro-5,6,7,8-tetrahydrobiopterin + L-phenylalanine + O2 = (4aS,6R)-4a-hydroxy-L-erythro-5,6,7,8-tetrahydrobiopterin + L-tyrosine. It participates in amino-acid degradation; L-phenylalanine degradation; acetoacetate and fumarate from L-phenylalanine: step 1/6. Its activity is regulated as follows. N-terminal region of PAH is thought to contain allosteric binding sites for phenylalanine and to constitute an 'inhibitory' domain that regulates the activity of a catalytic domain in the C-terminal portion of the molecule. Catalyzes the hydroxylation of L-phenylalanine to L-tyrosine. This chain is Phenylalanine-4-hydroxylase (PAH), found in Bos taurus (Bovine).